Here is a 301-residue protein sequence, read N- to C-terminus: tRNA dimethylallyltransferase (301 aa).

ATP is bound at residue 8–15 (GPTAVGKT). 10 to 15 (TAVGKT) provides a ligand contact to substrate. The interaction with substrate tRNA stretch occupies residues 33 to 36 (DSRQ).

Belongs to the IPP transferase family. In terms of assembly, monomer. Mg(2+) is required as a cofactor.

It catalyses the reaction adenosine(37) in tRNA + dimethylallyl diphosphate = N(6)-dimethylallyladenosine(37) in tRNA + diphosphate. In terms of biological role, catalyzes the transfer of a dimethylallyl group onto the adenine at position 37 in tRNAs that read codons beginning with uridine, leading to the formation of N6-(dimethylallyl)adenosine (i(6)A). The chain is tRNA dimethylallyltransferase from Thermosipho africanus (strain TCF52B).